Reading from the N-terminus, the 179-residue chain is Ribosome maturation factor RimM (179 aa).

Residues 100–176 (HGEYHLTELI…FILLTPPSGL (77 aa)) enclose the PRC barrel domain.

The protein belongs to the RimM family. As to quaternary structure, binds ribosomal protein uS19.

It is found in the cytoplasm. Its function is as follows. An accessory protein needed during the final step in the assembly of 30S ribosomal subunit, possibly for assembly of the head region. Essential for efficient processing of 16S rRNA. May be needed both before and after RbfA during the maturation of 16S rRNA. It has affinity for free ribosomal 30S subunits but not for 70S ribosomes. This chain is Ribosome maturation factor RimM, found in Prochlorococcus marinus subsp. pastoris (strain CCMP1986 / NIES-2087 / MED4).